A 333-amino-acid chain; its full sequence is Ornithine carbamoyltransferase (333 aa).

Carbamoyl phosphate is bound by residues 56–59, arginine 107, and 134–137; these read STRT and HPTQ. Residues asparagine 167, aspartate 231, and 235–236 each bind L-ornithine; that span reads SM. Carbamoyl phosphate is bound by residues 273 to 274 and arginine 318; that span reads CL.

This sequence belongs to the aspartate/ornithine carbamoyltransferase superfamily. OTCase family.

It localises to the cytoplasm. The catalysed reaction is carbamoyl phosphate + L-ornithine = L-citrulline + phosphate + H(+). Its pathway is amino-acid degradation; L-arginine degradation via ADI pathway; carbamoyl phosphate from L-arginine: step 2/2. Reversibly catalyzes the transfer of the carbamoyl group from carbamoyl phosphate (CP) to the N(epsilon) atom of ornithine (ORN) to produce L-citrulline. This Clostridium botulinum (strain 657 / Type Ba4) protein is Ornithine carbamoyltransferase.